We begin with the raw amino-acid sequence, 116 residues long: Protein Wnt-5a (116 aa).

Residue S1 is the site of O-palmitoleoyl serine; by PORCN attachment. N-linked (GlcNAc...) asparagine glycosylation is found at N69 and N83. A disulfide bridge links C82 with C97.

The protein belongs to the Wnt family. Post-translationally, palmitoleoylation is required for efficient binding to frizzled receptors. Depalmitoleoylation leads to Wnt signaling pathway inhibition.

Its subcellular location is the secreted. It localises to the extracellular space. The protein resides in the extracellular matrix. Its function is as follows. Ligand for members of the frizzled family of seven transmembrane receptors. Can activate or inhibit canonical Wnt signaling, depending on receptor context. Required during embryogenesis for extension of the primary anterior-posterior axis. This Plestiodon skiltonianus (Western skink) protein is Protein Wnt-5a (WNT-5A).